Reading from the N-terminus, the 142-residue chain is Small ribosomal subunit protein uS12 (142 aa).

Residues 1–44 form a disordered region; that stretch reads MANGKYAARKLKQDRQQRRWSDSEYARRERGLGAKSDPLEGAPQ. Residues 11–32 show a composition bias toward basic and acidic residues; the sequence is LKQDRQQRRWSDSEYARRERGL.

The protein belongs to the universal ribosomal protein uS12 family. In terms of assembly, part of the 30S ribosomal subunit.

Its function is as follows. With S4 and S5 plays an important role in translational accuracy. Located at the interface of the 30S and 50S subunits. This Haloquadratum walsbyi (strain DSM 16790 / HBSQ001) protein is Small ribosomal subunit protein uS12.